The primary structure comprises 862 residues: Semaphorin-4D (862 aa).

A signal peptide spans 1–21 (MRMCTPIRGLLMALAVMFGTA). The Sema domain maps to 22–500 (MAFAPIPRIT…SNSGVVQAPL (479 aa)). At 22 to 734 (MAFAPIPRIT…TMYLKSSDNR (713 aa)) the chain is on the extracellular side. N-linked (GlcNAc...) asparagine glycans are attached at residues N49 and N77. 2 cysteine pairs are disulfide-bonded: C97–C108 and C126–C135. 2 N-linked (GlcNAc...) asparagine glycosylation sites follow: N139 and N191. 2 disulfides stabilise this stretch: C257-C370 and C281-C326. N-linked (GlcNAc...) asparagine glycans are attached at residues N329, N379, and N419. Residues 502–551 (FCGKHGTCEDCVLARDPYCAWSPPTATCVALHQTESPSRGLIQEMSGDAS) enclose the PSI domain. 4 disulfide bridges follow: C503/C520, C509/C553, C512/C529, and C576/C624. One can recognise an Ig-like C2-type domain in the interval 554–636 (PDKSKGSYRQ…EERVKNKTVF (83 aa)). N-linked (GlcNAc...) asparagine glycans are attached at residues N613 and N632. The helical transmembrane segment at 735–755 (LLMSLFLFFFVLFLCLFFYNC) threads the bilayer. Residues 756-862 (YKGYLPRQCL…KFADSDADGD (107 aa)) are Cytoplasmic-facing. The tract at residues 794–837 (VEPGSFSQQNGEHPKPALDTGYETEQDTITSKVPTDREDSQRID) is disordered. Basic and acidic residues predominate over residues 827–837 (PTDREDSQRID). S833 is subject to Phosphoserine.

Belongs to the semaphorin family. As to quaternary structure, homodimer. Interacts with PLXNB2. Interacts with PLXNB1. In terms of tissue distribution, strongly expressed in skeletal muscle, peripheral blood lymphocytes, spleen, and thymus and also expressed at lower levels in testes, brain, kidney, small intestine, prostate, heart, placenta, lung and pancreas, but not in colon and liver.

The protein localises to the cell membrane. In terms of biological role, cell surface receptor for PLXNB1 and PLXNB2 that plays an important role in cell-cell signaling. Regulates GABAergic synapse development. Promotes the development of inhibitory synapses in a PLXNB1-dependent manner. Modulates the complexity and arborization of developing neurites in hippocampal neurons by activating PLXNB1 and interaction with PLXNB1 mediates activation of RHOA. Promotes the migration of cerebellar granule cells. Plays a role in the immune system; induces B-cells to aggregate and improves their viability (in vitro). Induces endothelial cell migration through the activation of PTK2B/PYK2, SRC, and the phosphatidylinositol 3-kinase-AKT pathway. The chain is Semaphorin-4D (SEMA4D) from Homo sapiens (Human).